The chain runs to 588 residues: Adenine deaminase (588 aa).

The protein belongs to the metallo-dependent hydrolases superfamily. Adenine deaminase family. In terms of assembly, homodimer. Mn(2+) is required as a cofactor.

It carries out the reaction adenine + H2O + H(+) = hypoxanthine + NH4(+). This chain is Adenine deaminase, found in Shigella flexneri.